Reading from the N-terminus, the 357-residue chain is 4-hydroxy-3-methylbut-2-en-1-yl diphosphate synthase (flavodoxin) (357 aa).

[4Fe-4S] cluster-binding residues include C265, C268, C300, and E307.

It belongs to the IspG family. Homodimer. The cofactor is [4Fe-4S] cluster.

The enzyme catalyses (2E)-4-hydroxy-3-methylbut-2-enyl diphosphate + oxidized [flavodoxin] + H2O + 2 H(+) = 2-C-methyl-D-erythritol 2,4-cyclic diphosphate + reduced [flavodoxin]. Its pathway is isoprenoid biosynthesis; isopentenyl diphosphate biosynthesis via DXP pathway; isopentenyl diphosphate from 1-deoxy-D-xylulose 5-phosphate: step 5/6. In terms of biological role, converts 2C-methyl-D-erythritol 2,4-cyclodiphosphate (ME-2,4cPP) into 1-hydroxy-2-methyl-2-(E)-butenyl 4-diphosphate. This chain is 4-hydroxy-3-methylbut-2-en-1-yl diphosphate synthase (flavodoxin), found in Aquifex aeolicus (strain VF5).